Consider the following 363-residue polypeptide: Cytoplasmic tRNA 2-thiolation protein 1 (363 aa).

Residues A340 to A363 form a disordered region.

It belongs to the TtcA family. CTU1/NCS6/ATPBD3 subfamily.

It localises to the cytoplasm. Its pathway is tRNA modification; 5-methoxycarbonylmethyl-2-thiouridine-tRNA biosynthesis. In terms of biological role, plays a central role in 2-thiolation of mcm(5)S(2)U at tRNA wobble positions of tRNA(Lys), tRNA(Glu) and tRNA(Gln). Directly binds tRNAs and probably acts by catalyzing adenylation of tRNAs, an intermediate required for 2-thiolation. It is unclear whether it acts as a sulfurtransferase that transfers sulfur from thiocarboxylated URM1 onto the uridine of tRNAs at wobble position. Prior mcm(5) tRNA modification by the elongator complex is required for 2-thiolation. May also be involved in protein urmylation. In Cryptococcus neoformans var. neoformans serotype D (strain B-3501A) (Filobasidiella neoformans), this protein is Cytoplasmic tRNA 2-thiolation protein 1.